Consider the following 186-residue polypeptide: MAEVMLPRKMEILNHSSKFGSPDPLHVLAVDDSHVDRKFIERLLRVSSCKVTVVDSATRALQYLGLDVEEKSVGFEDLKVNLIMTDYSMPGMTGYELLKKIKESSAFREVPVVIMSSENILPRIDRCLEEGAEDFLLKPVKLSDVKRLRDSLMKVEDLSFTKSIQKRELETENVYPVHSQLKRAKI.

Positions 26–153 constitute a Response regulatory domain; it reads HVLAVDDSHV…DVKRLRDSLM (128 aa). A 4-aspartylphosphate modification is found at Asp-86.

Belongs to the ARR family. Type-A subfamily. Two-component system major event consists of a His-to-Asp phosphorelay between a sensor histidine kinase (HK) and a response regulator (RR). In plants, the His-to-Asp phosphorelay involves an additional intermediate named Histidine-containing phosphotransfer protein (HPt). This multistep phosphorelay consists of a His-Asp-His-Asp sequential transfer of a phosphate group between first a His and an Asp of the HK protein, followed by the transfer to a conserved His of the HPt protein and finally the transfer to an Asp in the receiver domain of the RR protein. In terms of tissue distribution, predominantly expressed in roots.

The protein localises to the nucleus. Functionally, functions as a response regulator involved in His-to-Asp phosphorelay signal transduction system. Phosphorylation of the Asp residue in the receiver domain activates the ability of the protein to promote the transcription of target genes. Type-A response regulators seem to act as negative regulators of the cytokinin signaling. This is Two-component response regulator ARR6 (ARR6) from Arabidopsis thaliana (Mouse-ear cress).